A 1365-amino-acid polypeptide reads, in one-letter code: Nuclear pore complex protein Nup154 (1365 aa).

The segment at M1–M508 is required for binding to Nup93-1 and anchoring to the nuclear pore complex. Residues M508–A986 form a required for binding to chromatin region.

The protein belongs to the non-repetitive/WGA-negative nucleoporin family. As to quaternary structure, interacts (via N-terminus) with Nup93-1. Interacts with Nup35. Interacts with cup.

It is found in the nucleus. It localises to the nuclear pore complex. The protein localises to the chromosome. The protein resides in the nucleus membrane. Its subcellular location is the cytoplasm. Functionally, component of the nuclear pore complex. Has a role in the organization of the inner nuclear membrane proteins at the nuclear envelope. In germ cells, plays a role in the nuclear localization of components of the dpp signaling pathways, such as Medea and phosphorylated Mad. Binds to chromatin, and together with Nup62 and Nup93-1, contributes to karyosome morphology and chromatin organization including attachment to the nuclear envelope in oocytes and nurse cells. Has a role in female fertility including egg chamber development; in nurse cells, has a role in the organization of F-actin in subcortical and cytoplasmic actin filaments important for the transfer of cytoplasm from nurse cells to the growing oocytes. Has a role in male spermatogenesis and fertility. Has a role in germ line cell proliferation. The sequence is that of Nuclear pore complex protein Nup154 from Drosophila melanogaster (Fruit fly).